The sequence spans 274 residues: MSAGRRSSGGRSAAAPRFTPPRGRAPLAVALDAPDAATALRWAAAVAPTVAVLKIGLELFYREGPAIVTALRAAGVLAGAGGAAVAAGGTGSAPELFLDLKLHDIPATVAGGMRSITPLGPRFVTVHAAGGAAMIRAAIEAAPDVEVAVVTVLTSLDVAALSAIGLAGPPSDAVRRLAVLAVEAGARTLVCSPREVRMVRMELGSNVTLITPGVRPAGSETGDQARTATPEAALVGGSDLVVVGRPITGAPDPGVAARAIAAGLSAAGRAADLL.

The segment covering 1–15 (MSAGRRSSGGRSAAA) has biased composition (low complexity). The disordered stretch occupies residues 1–21 (MSAGRRSSGGRSAAAPRFTPP). Substrate is bound by residues aspartate 32, lysine 54, 99 to 108 (DLKLHDIPAT), threonine 154, arginine 215, glutamine 224, glycine 244, and arginine 245. The active-site Proton donor is the lysine 101.

This sequence belongs to the OMP decarboxylase family. Type 1 subfamily. Homodimer.

The enzyme catalyses orotidine 5'-phosphate + H(+) = UMP + CO2. It participates in pyrimidine metabolism; UMP biosynthesis via de novo pathway; UMP from orotate: step 2/2. In terms of biological role, catalyzes the decarboxylation of orotidine 5'-monophosphate (OMP) to uridine 5'-monophosphate (UMP). The protein is Orotidine 5'-phosphate decarboxylase of Frankia casuarinae (strain DSM 45818 / CECT 9043 / HFP020203 / CcI3).